We begin with the raw amino-acid sequence, 1055 residues long: SMC5-SMC6 complex localization factor protein 1 (1055 aa).

BRCT domains are found at residues 2-80 and 121-199; these read EDDA…AQSG and PGAF…LLEK. A disordered region spans residues 312 to 332; it reads KKRKKEKERDSRKDIEHDRST. A compositionally biased stretch (basic and acidic residues) spans 318-332; sequence KERDSRKDIEHDRST. The NSE5-like domain; mediates interaction with SLF2 stretch occupies residues 407-1055; sequence PRGILNLIES…VMCRSVTEIS (649 aa). ANK repeat units follow at residues 804 to 834, 838 to 867, and 872 to 901; these read KGET…DINV, AGWT…EVDL, and DGVT…PVLL. Residue Lys929 forms a Glycyl lysine isopeptide (Lys-Gly) (interchain with G-Cter in SUMO2) linkage.

Interacts (via N-terminus) with SLF2; this interaction links RAD18 to the SMC5-SMC6 complex. Interacts (via BRCT domains) with RAD18; this interaction occurs in a SLF2-independent manner. Interacts with SMC6. Interacts (via BRCT domains) with RAD18 (via C-terminus and phosphorylated form); this interaction is required for efficient repair of UV-induced DNA damage.

It is found in the nucleus. The protein resides in the cytoplasm. The protein localises to the cytoskeleton. Its subcellular location is the microtubule organizing center. It localises to the centrosome. Plays a role in the DNA damage response (DDR) pathway by regulating postreplication repair of UV-damaged DNA and genomic stability maintenance. The SLF1-SLF2 complex acts to link RAD18 with the SMC5-SMC6 complex at replication-coupled interstrand cross-links (ICL) and DNA double-strand breaks (DSBs) sites on chromatin during DNA repair in response to stalled replication forks. Promotes the recruitment of SLF2 and the SMC5-SMC6 complex to DNA lesions. In Bos taurus (Bovine), this protein is SMC5-SMC6 complex localization factor protein 1.